A 498-amino-acid polypeptide reads, in one-letter code: Zinc finger protein 395 (498 aa).

Residues 129–165 (QKPLSSPIEQSLPTSPGATSTSAQRSVSRSIDVPKRR) form a disordered region. Residues 130-157 (KPLSSPIEQSLPTSPGATSTSAQRSVSR) are compositionally biased toward polar residues. Positions 171 to 180 (MDEMMAAMVL) match the Nuclear export signal motif. The interval 209-245 (KEGGDVSDSGSSTTSGHWSASSGVSTPSPPHTDASPK) is disordered. Positions 214 to 231 (VSDSGSSTTSGHWSASSG) are enriched in low complexity. The C2H2-type zinc-finger motif lies at 285–310 (YKCLWPNCGKLLRSIVGIKRHVKTQH).

The protein resides in the cytoplasm. The protein localises to the nucleus. The sequence is that of Zinc finger protein 395 (znf395) from Xenopus laevis (African clawed frog).